Here is a 230-residue protein sequence, read N- to C-terminus: LexA repressor (230 aa).

The H-T-H motif DNA-binding region spans 28–48 (IREIGEALDIRSTNGVNDHLK). Residues S148 and K185 each act as for autocatalytic cleavage activity in the active site.

It belongs to the peptidase S24 family. As to quaternary structure, homodimer.

It carries out the reaction Hydrolysis of Ala-|-Gly bond in repressor LexA.. Its function is as follows. Represses a number of genes involved in the response to DNA damage (SOS response), including recA and lexA. In the presence of single-stranded DNA, RecA interacts with LexA causing an autocatalytic cleavage which disrupts the DNA-binding part of LexA, leading to derepression of the SOS regulon and eventually DNA repair. The sequence is that of LexA repressor from Anaeromyxobacter sp. (strain K).